The following is a 366-amino-acid chain: Pectinesterase A (366 aa).

The signal sequence occupies residues 1-24 (MLKTISGTLALSLIIAASVHQAQA). Substrate is bound by residues Thr-109 and Gln-153. The active-site Proton donor is the Asp-178. An intrachain disulfide couples Cys-192 to Cys-212. The active-site Nucleophile is Asp-199. Substrate contacts are provided by Arg-219, Asn-226, Tyr-230, Arg-267, Trp-269, and Thr-272.

It belongs to the pectinesterase family. As to quaternary structure, monomer.

The protein resides in the secreted. The catalysed reaction is [(1-&gt;4)-alpha-D-galacturonosyl methyl ester](n) + n H2O = [(1-&gt;4)-alpha-D-galacturonosyl](n) + n methanol + n H(+). It functions in the pathway glycan metabolism; pectin degradation; 2-dehydro-3-deoxy-D-gluconate from pectin: step 1/5. Functionally, catalyzes the first step in maceration and soft-rotting of plant tissue. The protein is Pectinesterase A of Dickeya dadantii (strain 3937) (Erwinia chrysanthemi (strain 3937)).